Here is a 223-residue protein sequence, read N- to C-terminus: MHMKSFKIAIDGPAGSGKSTISKKLSQKLGWNHVDTGAMFRALTLYLLENEVSWHHEKSLNQALDKINLSYSCNKIFLNQEDVSLKIKSLDVEKHVSSVALIPAVRTKLLKLQKEICGNTPNLIMDGRDIGTVVMPDANLKIFLTANITKRALRKQQEDAQKGKITDIAQIMKQLKERDHKDYHRQLAPLSKALDAILLDTTELSIDEVIAKIIALIDKKRRT.

12-20 (GPAGSGKST) contributes to the ATP binding site.

It belongs to the cytidylate kinase family. Type 1 subfamily.

The protein localises to the cytoplasm. It carries out the reaction CMP + ATP = CDP + ADP. The enzyme catalyses dCMP + ATP = dCDP + ADP. This chain is Cytidylate kinase, found in Onion yellows phytoplasma (strain OY-M).